Here is a 102-residue protein sequence, read N- to C-terminus: NADH-quinone oxidoreductase subunit K (102 aa).

3 helical membrane-spanning segments follow: residues 5–25, 31–51, and 62–82; these read LGHF…GIFL, IVLL…FVAF, and VFVF…LAIL.

This sequence belongs to the complex I subunit 4L family. NDH-1 is composed of 14 different subunits. Subunits NuoA, H, J, K, L, M, N constitute the membrane sector of the complex.

The protein resides in the cell inner membrane. It catalyses the reaction a quinone + NADH + 5 H(+)(in) = a quinol + NAD(+) + 4 H(+)(out). NDH-1 shuttles electrons from NADH, via FMN and iron-sulfur (Fe-S) centers, to quinones in the respiratory chain. The immediate electron acceptor for the enzyme in this species is believed to be ubiquinone. Couples the redox reaction to proton translocation (for every two electrons transferred, four hydrogen ions are translocated across the cytoplasmic membrane), and thus conserves the redox energy in a proton gradient. The chain is NADH-quinone oxidoreductase subunit K from Paracidovorax citrulli (strain AAC00-1) (Acidovorax citrulli).